A 156-amino-acid chain; its full sequence is SPbeta prophage-derived uncharacterized protein YorH (156 aa).

This is SPbeta prophage-derived uncharacterized protein YorH (yorH) from Bacillus subtilis (strain 168).